The chain runs to 88 residues: LYR motif-containing protein 2 (88 aa).

A mitochondrion-targeting transit peptide spans 1–19; the sequence is MATSRLPPATLTLKQFMRR.

It belongs to the complex I LYR family.

It localises to the mitochondrion. Functionally, involved in efficient integration of the N-module into mitochondrial respiratory chain complex I. The sequence is that of LYR motif-containing protein 2 (LYRM2) from Bos taurus (Bovine).